A 196-amino-acid polypeptide reads, in one-letter code: Small ribosomal subunit protein uS4c (196 aa).

A disordered region spans residues 17–36 (ALPGLTRKTPKSGSNLKKKF). In terms of domain architecture, S4 RNA-binding spans 89–150 (MRLDNIVFRL…NQRSKRLVQN (62 aa)).

It belongs to the universal ribosomal protein uS4 family. In terms of assembly, part of the 30S ribosomal subunit. Contacts protein S5. The interaction surface between S4 and S5 is involved in control of translational fidelity.

The protein localises to the plastid. It localises to the chloroplast. Its function is as follows. One of the primary rRNA binding proteins, it binds directly to 16S rRNA where it nucleates assembly of the body of the 30S subunit. With S5 and S12 plays an important role in translational accuracy. The sequence is that of Small ribosomal subunit protein uS4c (rps4) from Tragus racemosus (Carrot grass).